We begin with the raw amino-acid sequence, 483 residues long: Glutamyl-tRNA(Gln) amidotransferase subunit A (483 aa).

Residues lysine 76 and serine 151 each act as charge relay system in the active site. Serine 175 serves as the catalytic Acyl-ester intermediate.

This sequence belongs to the amidase family. GatA subfamily. As to quaternary structure, heterotrimer of A, B and C subunits.

The enzyme catalyses L-glutamyl-tRNA(Gln) + L-glutamine + ATP + H2O = L-glutaminyl-tRNA(Gln) + L-glutamate + ADP + phosphate + H(+). Allows the formation of correctly charged Gln-tRNA(Gln) through the transamidation of misacylated Glu-tRNA(Gln) in organisms which lack glutaminyl-tRNA synthetase. The reaction takes place in the presence of glutamine and ATP through an activated gamma-phospho-Glu-tRNA(Gln). The protein is Glutamyl-tRNA(Gln) amidotransferase subunit A of Pseudomonas putida (strain GB-1).